Here is an 842-residue protein sequence, read N- to C-terminus: DNA gyrase subunit A (842 aa).

The 470-residue stretch at 42 to 511 (LPEVRDGLKP…ADGEVSDEDL (470 aa)) folds into the Topo IIA-type catalytic domain. Tyr130 acts as the O-(5'-phospho-DNA)-tyrosine intermediate in catalysis. The GyrA-box motif lies at 538–544 (QKRGGKG). Residues 822-842 (EDEAAESISESDADTAESPEA) form a disordered region.

The protein belongs to the type II topoisomerase GyrA/ParC subunit family. Heterotetramer, composed of two GyrA and two GyrB chains. In the heterotetramer, GyrA contains the active site tyrosine that forms a transient covalent intermediate with DNA, while GyrB binds cofactors and catalyzes ATP hydrolysis.

The protein resides in the cytoplasm. The enzyme catalyses ATP-dependent breakage, passage and rejoining of double-stranded DNA.. Its activity is regulated as follows. Inhibited by 4-quinoline drugs (nalidixic acid, ciprofloxacin, ofloxacin), although it is much less sensitive than the corresponding enzyme from E.coli. A type II topoisomerase that negatively supercoils closed circular double-stranded (ds) DNA in an ATP-dependent manner to modulate DNA topology and maintain chromosomes in an underwound state. Negative supercoiling favors strand separation, and DNA replication, transcription, recombination and repair, all of which involve strand separation. Also able to catalyze the interconversion of other topological isomers of dsDNA rings, including catenanes and knotted rings. Type II topoisomerases break and join 2 DNA strands simultaneously in an ATP-dependent manner. The protein is DNA gyrase subunit A of Mycolicibacterium smegmatis (strain ATCC 700084 / mc(2)155) (Mycobacterium smegmatis).